The sequence spans 1941 residues: Xin actin-binding repeat-containing protein 1 (1941 aa).

Residues 1–41 form a disordered region; sequence MAEPQKSSKVAIKKMEDDLPPPPIPDSIQVIAPASQDPNPL. Xin repeat units follow at residues 108–123, 143–158, 176–191, 215–230, 255–270, 293–308, 331–346, 368–383, 402–417, 439–454, 475–490, 510–525, 548–563, 586–601, 624–639, 658–673, 697–712, 736–751, 769–784, 805–820, 842–857, 880–895, 917–932, 951–966, 982–997, 1020–1035, and 1055–1070; these read GEVQSMRWIFENWALD, GDVKSTSLRFENQSVN, GDVHTARWLFETQPLD, GDVKGAKELFEAQSLD, GDVKKTIRLFQTEPLC, NAVRTARWLFETQPLD, PDVSGARWIFETQPLD, ADVTKQRLLFGTQALD, GDVKSTLWLFETQPME, GDVKQRKHVFETCPLG, GDVKSFKTLFETLPLD, GNVKANQILFETTPLY, GDVKKYKWMFETRPLD, GDVRTAKWLFETQPMD, GDVKTCRWLFETQPMH, ADVKSYTWMFETQPLD, VDVKTVRHLFETEPLG, GEVSRVKEFFEAKPLD, GSVHKFTWLFENYPMD, GDVGGKRFIFETYSLD, ANVKSCTMLFESQPLY, GDVKGARWLFETKPLD, GDVQAARWRFETEPLD, GDVQSNKQLFESQQVG, GDVRTSTWLFENQPVD, GDVKRCTWLFETQPMD, and ADVKSTTWLFESTPLD. A compositionally biased stretch (polar residues) spans 1514 to 1565; that stretch reads ASKQETKTLQSTIHQQESASTMRENTSTAIRTSTTRVQEASRTHTSVSQKSI. Disordered stretches follow at residues 1514–1568, 1715–1856, and 1914–1941; these read ASKQ…IASH, ASGS…PPPA, and YKARKGGQGKFELDRAKPSKPVKNGEVG. Over residues 1820–1833 the composition is skewed to low complexity; the sequence is SASTNNSTNRSTKS. Residues 1834-1843 show a composition bias toward pro residues; that stretch reads VPPPVPPKPP.

Belongs to the Xin family. In terms of tissue distribution, expressed at intercalated disks in the heart (at protein level).

Its subcellular location is the cell junction. The protein resides in the adherens junction. It is found in the desmosome. In terms of biological role, involved in cardiac morphogenesis, including heart midline formation, cardiac tubule looping, myocardial formation and maintenance of heart beat speed and rhythm. May protect actin filaments from depolymerization. May play a role in development of normal skeletal muscle morphology, muscle fiber type composition and regulation of muscle satellite cell activation and survival. The protein is Xin actin-binding repeat-containing protein 1 of Gallus gallus (Chicken).